The primary structure comprises 407 residues: Transcriptional regulator UL34 (407 aa).

Disordered stretches follow at residues 268 to 330 and 388 to 407; these read AAGP…EELF and SPSVTPALTPVTSPITPLCI. The segment covering 273 to 286 has biased composition (acidic residues); it reads EADENNDEGEEDDD. Residues 287–301 are compositionally biased toward basic and acidic residues; the sequence is ELRHSDPAPLHESKK. Residues 302–312 are compositionally biased toward basic residues; it reads PRNARRPRTRV.

This sequence belongs to the HHV-5 UL34 protein family.

Its subcellular location is the host nucleus. In terms of biological role, acts as a transcriptional repressor of the US3 gene expression through a specific DNA sequence named the transcriptional repressive element (tre). The protein is Transcriptional regulator UL34 (UL34) of Human cytomegalovirus (strain Towne) (HHV-5).